Here is a 153-residue protein sequence, read N- to C-terminus: Transcriptional repressor NrdR (153 aa).

The segment at 3-34 is a zinc-finger region; the sequence is CPSCSHNGTRVLDSRPVDEGRSIRRRRECESC. One can recognise an ATP-cone domain in the interval 49-139; sequence LIVVKKEGTR…VYRQFKDLNV (91 aa).

This sequence belongs to the NrdR family. Requires Zn(2+) as cofactor.

Its function is as follows. Negatively regulates transcription of bacterial ribonucleotide reductase nrd genes and operons by binding to NrdR-boxes. The sequence is that of Transcriptional repressor NrdR from Bacillus anthracis (strain A0248).